The following is a 263-amino-acid chain: uncharacterized protein (263 aa).

Residue 31 to 38 participates in ATP binding; sequence GPTGSGKT.

This sequence belongs to the CbbQ/NirQ/NorQ/GpvN family.

This is an uncharacterized protein from Staphylococcus saprophyticus subsp. saprophyticus (strain ATCC 15305 / DSM 20229 / NCIMB 8711 / NCTC 7292 / S-41).